Reading from the N-terminus, the 148-residue chain is Endothelial differentiation-related factor 1 (148 aa).

Alanine 2 carries the N-acetylalanine modification. Serine 4 carries the phosphoserine modification. Lysine 25 is modified (N6-methyllysine). The segment at 34–67 is disordered; sequence RGEDVETSKKWAAGQNKQHSITKNTAKLDRETEE. The interval 37-113 is interaction with NR5A2, PPARG and NR1H3; that stretch reads DVETSKKWAA…QVIADYESGR (77 aa). Residues 48–58 are compositionally biased toward polar residues; the sequence is QNKQHSITKNT. The interaction with TBP and NR5A1 stretch occupies residues 69 to 108; that stretch reads HHDRVTLEVGKVIQRGRQSKGLTQKDLATKINEKPQVIAD. The short motif at 81 to 88 is the IQ motif element; it reads IQRGRQSK. The HTH cro/C1-type domain occupies 81–135; the sequence is IQRGRQSKGLTQKDLATKINEKPQVIADYESGRAIPNNQVLGKIERAIGLKLRGK. Residues 92–111 constitute a DNA-binding region (H-T-H motif); sequence QKDLATKINEKPQVIADYES.

As to quaternary structure, interacts with TBP and the transcription factor IID (TFIID) complex, NR5A2, NR1H3 and PPARG. Interaction with TBP is regulated by phosphorylation. Binds NR5A1, ATF1, FOS and JUN via their conserved basic region. Binding to calmodulin is regulated by calcium and phosphorylation of the IQ motif. Phosphorylated. Expressed in brain, liver, kidney and heart (at protein level). Also expressed in testis.

The protein resides in the cytoplasm. Its subcellular location is the nucleus. In terms of biological role, transcriptional coactivator stimulating NR5A1 and ligand-dependent NR1H3/LXRA and PPARG transcriptional activities. Enhances the DNA-binding activity of ATF1, ATF2, CREB1 and NR5A1. Regulates nitric oxid synthase activity probably by sequestering calmodulin in the cytoplasm. Might function in endothelial cells differentiation, hormone-induced cardiomyocytes hypertrophy and lipid metabolism. In Mus musculus (Mouse), this protein is Endothelial differentiation-related factor 1 (Edf1).